We begin with the raw amino-acid sequence, 381 residues long: MESIGIVAPQTMHFAEPLRLQSGSVIGNYQLVVETYGELNAARSNAVLVCHALNASHHVAGVYADDPRSTGWWDNLVGPGKPLDTNRFFVIGVNNLGSCFGSTGPMSIDPSSGKPYGARFPVVTVEDWVHAQARVADAFGIERFAAVMGGSLGGMQALAWSLMYPERVAHCIDIASTPKLSAQNIAFNEVARSAILSDPDFHGGDYYAHGVKPKRGLRVARMIGHITYLSDDDMAEKFGRALRRADGALDAYNFSFDVEFEVESYLRYQGDKFADYFDANTYLLITRALDYFDPAKAFDGNLTAALAHTQAKYLIASFSTDWRFAPARSREIVKALLDNKRTVSYAEIDAPHGHDAFLLDDARYHNLLRAYYERIANEVGA.

An AB hydrolase-1 domain is found at asparagine 45–aspartate 360. Serine 151 functions as the Nucleophile in the catalytic mechanism. Arginine 221 serves as a coordination point for substrate. Catalysis depends on residues aspartate 321 and histidine 354. Aspartate 355 contributes to the substrate binding site.

It belongs to the AB hydrolase superfamily. MetX family. Homodimer.

The protein localises to the cytoplasm. The enzyme catalyses L-homoserine + succinyl-CoA = O-succinyl-L-homoserine + CoA. It functions in the pathway amino-acid biosynthesis; L-methionine biosynthesis via de novo pathway; O-succinyl-L-homoserine from L-homoserine: step 1/1. In terms of biological role, transfers a succinyl group from succinyl-CoA to L-homoserine, forming succinyl-L-homoserine. The chain is Homoserine O-succinyltransferase from Burkholderia ambifaria (strain MC40-6).